Reading from the N-terminus, the 194-residue chain is GTP cyclohydrolase 1 (194 aa).

Residues Cys83, His86, and Cys155 each contribute to the Zn(2+) site.

The protein belongs to the GTP cyclohydrolase I family. Toroid-shaped homodecamer, composed of two pentamers of five dimers.

The enzyme catalyses GTP + H2O = 7,8-dihydroneopterin 3'-triphosphate + formate + H(+). Its pathway is cofactor biosynthesis; 7,8-dihydroneopterin triphosphate biosynthesis; 7,8-dihydroneopterin triphosphate from GTP: step 1/1. This Streptococcus pyogenes serotype M5 (strain Manfredo) protein is GTP cyclohydrolase 1.